The chain runs to 490 residues: Glutamyl-tRNA(Gln) amidotransferase subunit A (490 aa).

Catalysis depends on charge relay system residues Lys81 and Ser156. Ser180 acts as the Acyl-ester intermediate in catalysis.

The protein belongs to the amidase family. GatA subfamily. In terms of assembly, heterotrimer of A, B and C subunits.

The enzyme catalyses L-glutamyl-tRNA(Gln) + L-glutamine + ATP + H2O = L-glutaminyl-tRNA(Gln) + L-glutamate + ADP + phosphate + H(+). In terms of biological role, allows the formation of correctly charged Gln-tRNA(Gln) through the transamidation of misacylated Glu-tRNA(Gln) in organisms which lack glutaminyl-tRNA synthetase. The reaction takes place in the presence of glutamine and ATP through an activated gamma-phospho-Glu-tRNA(Gln). This Nocardia farcinica (strain IFM 10152) protein is Glutamyl-tRNA(Gln) amidotransferase subunit A.